Here is a 458-residue protein sequence, read N- to C-terminus: V-type ATP synthase beta chain (458 aa).

This sequence belongs to the ATPase alpha/beta chains family.

In terms of biological role, produces ATP from ADP in the presence of a proton gradient across the membrane. The V-type beta chain is a regulatory subunit. The sequence is that of V-type ATP synthase beta chain from Fusobacterium nucleatum subsp. nucleatum (strain ATCC 25586 / DSM 15643 / BCRC 10681 / CIP 101130 / JCM 8532 / KCTC 2640 / LMG 13131 / VPI 4355).